Reading from the N-terminus, the 191-residue chain is Adenylate kinase (191 aa).

11 to 16 is a binding site for ATP; sequence GSGKGT. The NMP stretch occupies residues 31–60; that stretch reads STGEILRREIKDKTELGKIAEEYINQGQLL. AMP is bound by residues Thr32, Arg37, 58–60, 86–89, and Gln93; these read QLL and GFPR. The interval 127-137 is LID; that stretch reads KRGKLFSRKDD. Arg128 is a binding site for ATP. AMP contacts are provided by Arg134 and Arg145. Asn173 provides a ligand contact to ATP.

This sequence belongs to the adenylate kinase family. In terms of assembly, monomer.

It localises to the cytoplasm. It catalyses the reaction AMP + ATP = 2 ADP. Its pathway is purine metabolism; AMP biosynthesis via salvage pathway; AMP from ADP: step 1/1. Functionally, catalyzes the reversible transfer of the terminal phosphate group between ATP and AMP. Plays an important role in cellular energy homeostasis and in adenine nucleotide metabolism. In Azobacteroides pseudotrichonymphae genomovar. CFP2, this protein is Adenylate kinase.